Consider the following 62-residue polypeptide: Defensin BmKDfsin6 (62 aa).

Positions 1–24 (MKVIAILFLLAFVLCTMEITMVEA) are cleaved as a signal peptide. Intrachain disulfides connect Cys28-Cys49, Cys35-Cys57, and Cys39-Cys59.

It belongs to the invertebrate defensin family. Type 2 subfamily. As to expression, highly expressed in non-venom gland (hemolymph) and moderately expressed in venom gland.

Its subcellular location is the secreted. Functionally, antibacterial peptide active against Gram-positive bacteria, but not on Gram-negative bacteria. Also has weak blocking activity on Kv1.1/KCNA1, Kv1.2/KCNA2, Kv1.3/KCNA3, KCa3.1/KCNN4/IK, KCa2.3/KCNN3/SK3 and Kv11.1/KCNH2/ERG1 channels (tested at 1 uM). It inhibits potassium channel current by interacting with the pore region. This Olivierus martensii (Manchurian scorpion) protein is Defensin BmKDfsin6.